We begin with the raw amino-acid sequence, 105 residues long: MKNKIKIRLKSFDHRSLDQATKEIVSAVKRTFANINGPIPLPRKIERFTVNRSPHVHKKSREQFEIRKHKRLLVIDDPNPAVVDALSKVDLAAGVDVVIELESGE.

It belongs to the universal ribosomal protein uS10 family. As to quaternary structure, part of the 30S ribosomal subunit.

Its function is as follows. Involved in the binding of tRNA to the ribosomes. This chain is Small ribosomal subunit protein uS10, found in Rickettsia felis (strain ATCC VR-1525 / URRWXCal2) (Rickettsia azadi).